We begin with the raw amino-acid sequence, 202 residues long: Small ribosomal subunit protein uS4 (202 aa).

Basic residues predominate over residues 1 to 13 (MSRYRGPRLRVTR). Positions 1–42 (MSRYRGPRLRVTRRLGELPGLTRKASKKSNPPGQHGQARRKR) are disordered. In terms of domain architecture, S4 RNA-binding spans 90–152 (NRLDNVCFRL…KASKKLVEGN (63 aa)).

It belongs to the universal ribosomal protein uS4 family. As to quaternary structure, part of the 30S ribosomal subunit. Contacts protein S5. The interaction surface between S4 and S5 is involved in control of translational fidelity.

One of the primary rRNA binding proteins, it binds directly to 16S rRNA where it nucleates assembly of the body of the 30S subunit. Functionally, with S5 and S12 plays an important role in translational accuracy. The protein is Small ribosomal subunit protein uS4 of Prochlorococcus marinus (strain MIT 9312).